Reading from the N-terminus, the 475-residue chain is tRNA modification GTPase MnmE (475 aa).

(6S)-5-formyl-5,6,7,8-tetrahydrofolate contacts are provided by R24, E81, and K124. Residues 220 to 397 (GLSVVLAGQP…LRKELLRLVG (178 aa)) form the TrmE-type G domain. N230 serves as a coordination point for K(+). GTP-binding positions include 230 to 235 (NVGKSS), 249 to 255 (TPIAGTT), 274 to 277 (DTAG), and 378 to 380 (SAR). S234 lines the Mg(2+) pocket. T249, I251, and T254 together coordinate K(+). A Mg(2+)-binding site is contributed by T255. A (6S)-5-formyl-5,6,7,8-tetrahydrofolate-binding site is contributed by K475.

The protein belongs to the TRAFAC class TrmE-Era-EngA-EngB-Septin-like GTPase superfamily. TrmE GTPase family. Homodimer. Heterotetramer of two MnmE and two MnmG subunits. K(+) serves as cofactor.

Its subcellular location is the cytoplasm. Functionally, exhibits a very high intrinsic GTPase hydrolysis rate. Involved in the addition of a carboxymethylaminomethyl (cmnm) group at the wobble position (U34) of certain tRNAs, forming tRNA-cmnm(5)s(2)U34. This Cupriavidus pinatubonensis (strain JMP 134 / LMG 1197) (Cupriavidus necator (strain JMP 134)) protein is tRNA modification GTPase MnmE.